An 81-amino-acid polypeptide reads, in one-letter code: Acylphosphatase (81 aa).

Residues 1-81 enclose the Acylphosphatase-like domain; the sequence is MYIFHGRVQG…VKYNDFQIRY (81 aa). Catalysis depends on residues Arg-14 and Asn-32.

The protein belongs to the acylphosphatase family.

The enzyme catalyses an acyl phosphate + H2O = a carboxylate + phosphate + H(+). In Picrophilus torridus (strain ATCC 700027 / DSM 9790 / JCM 10055 / NBRC 100828 / KAW 2/3), this protein is Acylphosphatase (acyP).